The sequence spans 452 residues: Putative tripartite motif-containing protein 49B (452 aa).

An RING-type zinc finger spans residues 15-56 (CPICMNYFIDPVTIDCGHSFCRPCFYLNWKDSPFLVQCSECT). The B box-type zinc finger occupies 88–129 (SEEQMCGTHRETKKMFCEVDRSLLCLLCSSSQEHRDHRHCPI). Zn(2+)-binding residues include Cys-93, His-96, Cys-115, and His-121. The B30.2/SPRY domain maps to 269–452 (ELSAGPITGL…LRPIFCCIHF (184 aa)).

This sequence belongs to the TRIM/RBCC family.

In Homo sapiens (Human), this protein is Putative tripartite motif-containing protein 49B (TRIM49B).